The primary structure comprises 97 residues: YcgL domain-containing protein PSPPH_1548 (97 aa).

Positions 3–87 (RICSIYRSPK…AEDDYIEHLP (85 aa)) constitute a YcgL domain.

This chain is YcgL domain-containing protein PSPPH_1548, found in Pseudomonas savastanoi pv. phaseolicola (strain 1448A / Race 6) (Pseudomonas syringae pv. phaseolicola (strain 1448A / Race 6)).